Reading from the N-terminus, the 607-residue chain is Granule-bound starch synthase 1, chloroplastic/amyloplastic (607 aa).

A chloroplast-targeting transit peptide spans 1-77; the sequence is MASITASHHF…RPGCSATIVC (77 aa). Lysine 95 is an ADP-alpha-D-glucose binding site. The disordered stretch occupies residues 585–607; that stretch reads SGSEPGVEGEEIAPLAKENVATP.

It belongs to the glycosyltransferase 1 family. Bacterial/plant glycogen synthase subfamily.

Its subcellular location is the plastid. It localises to the chloroplast. The protein resides in the amyloplast. The enzyme catalyses an NDP-alpha-D-glucose + [(1-&gt;4)-alpha-D-glucosyl](n) = [(1-&gt;4)-alpha-D-glucosyl](n+1) + a ribonucleoside 5'-diphosphate + H(+). It functions in the pathway glycan biosynthesis; starch biosynthesis. The protein is Granule-bound starch synthase 1, chloroplastic/amyloplastic (WAXY) of Solanum tuberosum (Potato).